Here is a 986-residue protein sequence, read N- to C-terminus: Resact receptor (986 aa).

A signal peptide spans 1–21 (MATTRLLFLLVVAVMITMVRS). The Extracellular portion of the chain corresponds to 22–507 (ATLHYNPTVI…GELCTNWGLY (486 aa)). Residues Asn185, Asn361, and Asn410 are each glycosylated (N-linked (GlcNAc...) asparagine). Residues 508–528 (LGTLIPAFIIIFGGGLGYYIY) form a helical membrane-spanning segment. Residues 529 to 986 (RKRAYEAALD…SHSCSALHSS (458 aa)) are Cytoplasmic-facing. Residues 568–836 (LSAISVISNA…PNIIEVRTML (269 aa)) form the Protein kinase domain.

Its subcellular location is the membrane. The catalysed reaction is GTP = 3',5'-cyclic GMP + diphosphate. In terms of biological role, implicated as a cell-surface receptor on spermatozoa for 'resact' a chemotactic peptide, and on various other cells as a receptor for atrial natriuretic peptide. The protein is Resact receptor of Arbacia punctulata (Punctuate sea urchin).